Reading from the N-terminus, the 284-residue chain is MAEITAKMVADLRAATGLGMMECKKALVEAEGNFDKAEEILRIKSGAKAGKLAGRTAAEGVLAYAINGNVGALVEVNCETDFVAKDAGFVEFANFVAKTAAEKKPASVEELSELVEAERKAIIAKLGENMSVRRFQVIDTANQLVAYIHGALATEGVLVEYKGSEDVARKIGMHIVAAKPQCVSEAEVDAETVEKERHIYTEQAIASGKPADIAAKMVEGRIRKFLAEITLNGQAFVMNPDQTVAQFSKENGTEVISFVRYKVGDGIEKKAVDYAAEVAAAAKV.

Positions 80–83 are involved in Mg(2+) ion dislocation from EF-Tu; that stretch reads TDFV.

The protein belongs to the EF-Ts family.

It is found in the cytoplasm. Its function is as follows. Associates with the EF-Tu.GDP complex and induces the exchange of GDP to GTP. It remains bound to the aminoacyl-tRNA.EF-Tu.GTP complex up to the GTP hydrolysis stage on the ribosome. In Neisseria meningitidis serogroup A / serotype 4A (strain DSM 15465 / Z2491), this protein is Elongation factor Ts.